Here is a 445-residue protein sequence, read N- to C-terminus: tRNA modification GTPase MnmE (445 aa).

Residues Arg-21, Glu-78, and Lys-117 each coordinate (6S)-5-formyl-5,6,7,8-tetrahydrofolate. The TrmE-type G domain occupies 213 to 370; that stretch reads GFRIALVGAP…LKETLSERVV (158 aa). Residues 223 to 228, 242 to 248, and 267 to 270 each bind GTP; these read NAGKST, TATPGTT, and DTAG. 2 residues coordinate Mg(2+): Ser-227 and Thr-248. A (6S)-5-formyl-5,6,7,8-tetrahydrofolate-binding site is contributed by Lys-445.

It belongs to the TRAFAC class TrmE-Era-EngA-EngB-Septin-like GTPase superfamily. TrmE GTPase family. In terms of assembly, homodimer. Heterotetramer of two MnmE and two MnmG subunits. Requires K(+) as cofactor.

Its subcellular location is the cytoplasm. In terms of biological role, exhibits a very high intrinsic GTPase hydrolysis rate. Involved in the addition of a carboxymethylaminomethyl (cmnm) group at the wobble position (U34) of certain tRNAs, forming tRNA-cmnm(5)s(2)U34. The sequence is that of tRNA modification GTPase MnmE from Phenylobacterium zucineum (strain HLK1).